The primary structure comprises 108 residues: Urease subunit gamma (108 aa).

The protein belongs to the urease gamma subunit family. Heterotrimer of UreA (gamma), UreB (beta) and UreC (alpha) subunits. Three heterotrimers associate to form the active enzyme.

It is found in the cytoplasm. It carries out the reaction urea + 2 H2O + H(+) = hydrogencarbonate + 2 NH4(+). The protein operates within nitrogen metabolism; urea degradation; CO(2) and NH(3) from urea (urease route): step 1/1. This Trichodesmium erythraeum (strain IMS101) protein is Urease subunit gamma.